Here is a 438-residue protein sequence, read N- to C-terminus: GTPase Obg (438 aa).

The 159-residue stretch at 1-159 (MAFRDVLNIE…RRVRLELRLI (159 aa)) folds into the Obg domain. Residues 160–332 (ADVGLVGYPN…LRETLFQLLP (173 aa)) enclose the OBG-type G domain. ATP contacts are provided by residues 166 to 173 (GYPNAGKS), 191 to 195 (FTTLS), 219 to 222 (DIPG), 285 to 288 (NKVE), and 313 to 315 (SAK). Residues Ser-173 and Thr-193 each contribute to the Mg(2+) site. The OCT domain maps to 357–435 (IVFREDAPAK…IGTFRFEYFD (79 aa)).

Belongs to the TRAFAC class OBG-HflX-like GTPase superfamily. OBG GTPase family. In terms of assembly, monomer. Mg(2+) is required as a cofactor.

Its subcellular location is the cytoplasm. In terms of biological role, an essential GTPase which binds GTP, GDP and possibly (p)ppGpp with moderate affinity, with high nucleotide exchange rates and a fairly low GTP hydrolysis rate. Plays a role in control of the cell cycle, stress response, ribosome biogenesis and in those bacteria that undergo differentiation, in morphogenesis control. This chain is GTPase Obg, found in Deinococcus radiodurans (strain ATCC 13939 / DSM 20539 / JCM 16871 / CCUG 27074 / LMG 4051 / NBRC 15346 / NCIMB 9279 / VKM B-1422 / R1).